The chain runs to 1501 residues: Multidrug resistance protein CDR1 (1501 aa).

A disordered region spans residues Met1–Asn30. The Cytoplasmic segment spans residues Met1–Ser513. The segment covering Ser8–Ile18 has biased composition (basic and acidic residues). One can recognise an ABC transporter 1 domain in the interval Leu150–Gln404. Residues Ile514–Tyr534 traverse the membrane as a helical segment. Asn535 is a glycosylation site (N-linked (GlcNAc...) asparagine). 4 consecutive transmembrane segments (helical) span residues Ala549–Phe569, Leu598–Phe618, Gly623–Phe643, and Gly655–Ile675. Asn724 carries N-linked (GlcNAc...) asparagine glycosylation. A helical transmembrane segment spans residues Leu765–Phe785. Topologically, residues Asn786–Gly1195 are cytoplasmic. The ABC transporter 2 domain occupies Phe859–Ala1103. Residue Gly895–Thr902 participates in ATP binding. 6 helical membrane passes run Tyr1196 to Phe1216, Phe1230 to Phe1250, Ile1281 to Leu1301, Gly1315 to Leu1335, Met1356 to Phe1376, and Phe1467 to Leu1487.

It belongs to the ABC transporter superfamily. ABCG family. PDR (TC 3.A.1.205) subfamily.

The protein resides in the membrane. Transporter, whose physiological function is not yet established. Confers resistance to the chemical cycloheximide. The chain is Multidrug resistance protein CDR1 (CDR1) from Candida albicans (Yeast).